A 279-amino-acid chain; its full sequence is Diaminopimelate epimerase (279 aa).

Substrate contacts are provided by Asn-11 and Asn-72. Residue Cys-81 is the Proton donor of the active site. Substrate contacts are provided by residues 82–83 (GN), Asn-187, and 205–206 (ER). Catalysis depends on Cys-215, which acts as the Proton acceptor. Residue 216 to 217 (GT) coordinates substrate.

The protein belongs to the diaminopimelate epimerase family. Homodimer.

It localises to the cytoplasm. It carries out the reaction (2S,6S)-2,6-diaminopimelate = meso-2,6-diaminopimelate. The protein operates within amino-acid biosynthesis; L-lysine biosynthesis via DAP pathway; DL-2,6-diaminopimelate from LL-2,6-diaminopimelate: step 1/1. In terms of biological role, catalyzes the stereoinversion of LL-2,6-diaminopimelate (L,L-DAP) to meso-diaminopimelate (meso-DAP), a precursor of L-lysine and an essential component of the bacterial peptidoglycan. The polypeptide is Diaminopimelate epimerase (Aquifex aeolicus (strain VF5)).